The following is a 480-amino-acid chain: Major facilitator superfamily domain-containing protein 12 (480 aa).

Position 1 is an N-acetylmethionine (M1). Residues 1–26 (MGPGPPAAGAAPSPRPLSLVARLSYA) are Cytoplasmic-facing. A helical membrane pass occupies residues 27 to 47 (VGHFLNDLCASMWFTYLLLYL). Residues 48–56 (HSVRAYSSR) lie on the Lumenal side of the membrane. The chain crosses the membrane as a helical span at residues 57–77 (GAGLLLLLGQVADGLCTPLVG). At 78–97 (YEADRAASCCARYGPRKAWH) the chain is on the cytoplasmic side. A helical transmembrane segment spans residues 98–118 (LVGTVCVLLSFPFIFSPCLGC). Topologically, residues 119–124 (GAATPE) are lumenal. The chain crosses the membrane as a helical span at residues 125-145 (WAALLYYGPFIVIFQFGWAST). At 146–170 (QISHLSLIPELVTNDHEKVELTALR) the chain is on the cytoplasmic side. Residues 171 to 191 (YAFTVVANITVYGAAWLLLHL) traverse the membrane as a helical segment. The Lumenal portion of the chain corresponds to 192–218 (QGSSRVEPTQDISISDQLGGQDVPVFR). A helical transmembrane segment spans residues 219–239 (NLSLLVVGVGAVFSLLFHLGT). At 240–279 (RERRRPHAEEPGEHTPLLAPATAQPLLLWKHWLREPAFYQ) the chain is on the cytoplasmic side. Position 254 is a phosphothreonine; by MTOR (T254). The helical transmembrane segment at 280-302 (VGILYMTTRLIVNLSQTYMAMYL) threads the bilayer. Topologically, residues 303–310 (TYSLHLPK) are lumenal. A helical transmembrane segment spans residues 311–331 (KFIATIPLVMYLSGFLSSFLM). At 332–347 (KPINKCIGRNMTYFSG) the chain is on the cytoplasmic side. A run of 2 helical transmembrane segments spans residues 348–368 (LLVILAFAAWVALAEGLGVAV) and 369–389 (YAAAVLLGAGCATILVTSLAM). The Cytoplasmic portion of the chain corresponds to 390–402 (TADLIGPHTNSGA). The helical transmembrane segment at 403 to 423 (FVYGSMSFLDKVANGLAVMAI) threads the bilayer. Residues 424-446 (QSLHPCPSELCCRACVSFYHWAM) lie on the Lumenal side of the membrane. The helical transmembrane segment at 447–467 (VAVTGGVGVAAALCLCSLLLW) threads the bilayer. Residues 468–480 (PTRLRRWDRDARP) lie on the Cytoplasmic side of the membrane.

It belongs to the major facilitator superfamily. In terms of processing, phosphorylation at Thr-254 by MTOR via mTORC1 pathway promotes cysteine transport in lysosomes, thereby regulating lysosomal cysteine and cystine storage and redox homeostasis. Widely expressed, with high expression in primary melanocytes.

The protein localises to the melanosome membrane. It is found in the lysosome membrane. The enzyme catalyses L-cysteine(in) = L-cysteine(out). In terms of biological role, transporter that mediates the import of cysteine into melanosomes, thereby regulating skin pigmentation. In melanosomes, cysteine import is required both for normal levels of cystine, the oxidized dimer of cysteine, and provide cysteine for the production of the cysteinyldopas used in pheomelanin synthesis, thereby regulating skin pigmentation. Also catalyzes import of cysteine into lysosomes in non-pigmented cells, regulating lysosomal cystine and cysteine storage, which is essnetial for redox homeostasis. This Homo sapiens (Human) protein is Major facilitator superfamily domain-containing protein 12.